The sequence spans 319 residues: Methionyl-tRNA formyltransferase (319 aa).

A (6S)-5,6,7,8-tetrahydrofolate-binding site is contributed by 116 to 119; the sequence is SLLP.

This sequence belongs to the Fmt family.

It carries out the reaction L-methionyl-tRNA(fMet) + (6R)-10-formyltetrahydrofolate = N-formyl-L-methionyl-tRNA(fMet) + (6S)-5,6,7,8-tetrahydrofolate + H(+). Attaches a formyl group to the free amino group of methionyl-tRNA(fMet). The formyl group appears to play a dual role in the initiator identity of N-formylmethionyl-tRNA by promoting its recognition by IF2 and preventing the misappropriation of this tRNA by the elongation apparatus. This Chlorobium phaeovibrioides (strain DSM 265 / 1930) (Prosthecochloris vibrioformis (strain DSM 265)) protein is Methionyl-tRNA formyltransferase.